A 149-amino-acid polypeptide reads, in one-letter code: Inner membrane protein YfeZ (149 aa).

Over 1 to 18 the chain is Cytoplasmic; that stretch reads MKSTEFHPVHYDAHGRLR. A helical membrane pass occupies residues 19–39; that stretch reads LPLLFWLVLLLQARTWVLFVI. Residues 40 to 58 lie on the Periplasmic side of the membrane; the sequence is AGASREQGTALLNLFYPDH. The helical transmembrane segment at 59–79 threads the bilayer; sequence DNFWLGLIPGIPAVLAFLLSG. Topologically, residues 80-89 are cytoplasmic; sequence RRATFPRTWR. A helical membrane pass occupies residues 90 to 110; the sequence is VLYFLLLLAQVVLLCWQPWLW. The Periplasmic segment spans residues 111 to 115; it reads LNGES. Residues 116-136 traverse the membrane as a helical segment; sequence VSGIGLALVVADIVALIWLLT. Residues 137–149 are Cytoplasmic-facing; the sequence is NRRLRACFYEVKE.

It localises to the cell inner membrane. This chain is Inner membrane protein YfeZ (yfeZ), found in Escherichia coli (strain K12).